Consider the following 650-residue polypeptide: 1-deoxy-D-xylulose-5-phosphate synthase (650 aa).

The segment covering 1–13 has biased composition (basic and acidic residues); the sequence is MSKIKNDKRETGH. A disordered region spans residues 1–23; it reads MSKIKNDKRETGHLKSPPETPLL. Thiamine diphosphate contacts are provided by residues H92 and 133–135; that span reads AHS. Mg(2+) is bound at residue D164. Residues 165–166, N193, Y302, and E384 each bind thiamine diphosphate; that span reads GA. Position 193 (N193) interacts with Mg(2+).

The protein belongs to the transketolase family. DXPS subfamily. Homodimer. Mg(2+) is required as a cofactor. It depends on thiamine diphosphate as a cofactor.

It carries out the reaction D-glyceraldehyde 3-phosphate + pyruvate + H(+) = 1-deoxy-D-xylulose 5-phosphate + CO2. Its pathway is metabolic intermediate biosynthesis; 1-deoxy-D-xylulose 5-phosphate biosynthesis; 1-deoxy-D-xylulose 5-phosphate from D-glyceraldehyde 3-phosphate and pyruvate: step 1/1. Its function is as follows. Catalyzes the acyloin condensation reaction between C atoms 2 and 3 of pyruvate and glyceraldehyde 3-phosphate to yield 1-deoxy-D-xylulose-5-phosphate (DXP). In Chelativorans sp. (strain BNC1), this protein is 1-deoxy-D-xylulose-5-phosphate synthase.